The following is an 871-amino-acid chain: MNYKDTLLMPKTDFPMRGGLPNKEPQIQEMWDNDDQYRKALEKNKNNPSFILHDGPPYANGNLHMGHALNKIIKDFIVRYKTMQGFYAPYVPGWDTHGLPIEQALTKKGVDRKKMSVAEFREKCKEFALKQIDIQKKDFKRLGVRGDFNNPYITLTPEYEAAQIRLFGEMADKGLIYKGKKPVYWSPSSESSLAEAEIEYHDKRSASIYVAFDVKDSKGKVDSDAQFIIWTTTPWTIPSNVAITVHPELKYGQYNVDGHKYIVAQALSEEVAEALGWDKDSIQLEKEFTGKELEFVEAQHPFLDRVSLVINGEHVTTDAGTGCVHTAPGHGEDDYIVGQKYDLPVISPLNDKGVFTEEGGPFEGMFYDKANKAVTDLLKEKDALLKLDFITHSYPHDWRTKKPVIFRATPQWFASINKVKQDILDAIEDTNFKVDWGKTRIYNMIRDRGEWVISRQRVWGVPLPVFYAENGDIIMTKETVNHVADLFEKYGSNIWFEKEAKELLPEGFSHPGSPNGEFTKETDIMDVWFDSGSSHRGVLETRPELSFPADLYFEGSDQYRGWFNSSITTAVATRGQAPYKFLLSHGFVMDGEGKKMSKSLGNVIVPDQVVKQKGADIARLWVSSTDYLSDVRISDEILKKTSDVYRKIRNTLRFMLGNINDFNPETDSIAETNLLEVDRYLLNRLREFTASTINNYENFDYLNIYQEVQNFINVELSNFYLDYGKDILYIEKKDSHKRRSMQTVLYQILIDMTKLLAPILVHTAEEVWSHTPHVKEESVHLSDMPKVVDVDEELLEKWNTFMNLRDDVNRALEQARNEKVIGKSLEAKVVIGNNETFNTAEFLQQFNDLQQLFIVSQVEVKDKVKLKILIR.

Residues 57–67 (PYANGNLHMGH) carry the 'HIGH' region motif. An L-isoleucyl-5'-AMP-binding site is contributed by Glu554. Residues 595–599 (KMSKS) carry the 'KMSKS' region motif. Lys598 serves as a coordination point for ATP.

The protein belongs to the class-I aminoacyl-tRNA synthetase family. IleS type 1 subfamily. Monomer.

It is found in the cytoplasm. The enzyme catalyses tRNA(Ile) + L-isoleucine + ATP = L-isoleucyl-tRNA(Ile) + AMP + diphosphate. Functionally, catalyzes the attachment of isoleucine to tRNA(Ile). As IleRS can inadvertently accommodate and process structurally similar amino acids such as valine, to avoid such errors it has two additional distinct tRNA(Ile)-dependent editing activities. One activity is designated as 'pretransfer' editing and involves the hydrolysis of activated Val-AMP. The other activity is designated 'posttransfer' editing and involves deacylation of mischarged Val-tRNA(Ile). The chain is Isoleucine--tRNA ligase from Staphylococcus epidermidis.